The sequence spans 173 residues: MAEKRNIFLVGPMGAGKSTIGRQLAQQLNMEFFDSDQEIERRTGADVGWVFDVEGEEGFRDREEKVINELTEKQGIVLATGGGSVKSRETRNRLSARGVVVYLETTIEKQLARTQRDKKRPLLQVDSPPREVLEALAKERNPLYEEIADVTIRTDDQSAKVVANQIINMLESN.

ATP is bound at residue 14–19; sequence GAGKST. A Mg(2+)-binding site is contributed by S18. Substrate-binding residues include D36, R60, and G82. Position 120 (R120) interacts with ATP. R140 contacts substrate. Q157 is a binding site for ATP.

The protein belongs to the shikimate kinase family. Monomer. Requires Mg(2+) as cofactor.

The protein resides in the cytoplasm. The enzyme catalyses shikimate + ATP = 3-phosphoshikimate + ADP + H(+). Its pathway is metabolic intermediate biosynthesis; chorismate biosynthesis; chorismate from D-erythrose 4-phosphate and phosphoenolpyruvate: step 5/7. Functionally, catalyzes the specific phosphorylation of the 3-hydroxyl group of shikimic acid using ATP as a cosubstrate. The polypeptide is Shikimate kinase 1 (Serratia proteamaculans (strain 568)).